Here is a 196-residue protein sequence, read N- to C-terminus: Proteasome subunit beta 1 (196 aa).

The propeptide at 1-6 is removed in mature form; by autocatalysis; it reads MEELPA. The active-site Nucleophile is threonine 7.

This sequence belongs to the peptidase T1B family. As to quaternary structure, the 20S proteasome core is composed of 14 alpha and 14 beta subunits that assemble into four stacked heptameric rings, resulting in a barrel-shaped structure. The two inner rings, each composed of seven catalytic beta subunits, are sandwiched by two outer rings, each composed of seven alpha subunits. The catalytic chamber with the active sites is on the inside of the barrel. Has a gated structure, the ends of the cylinder being occluded by the N-termini of the alpha-subunits. Is capped at one or both ends by the proteasome regulatory ATPase, PAN.

The protein localises to the cytoplasm. The enzyme catalyses Cleavage of peptide bonds with very broad specificity.. With respect to regulation, the formation of the proteasomal ATPase PAN-20S proteasome complex, via the docking of the C-termini of PAN into the intersubunit pockets in the alpha-rings, triggers opening of the gate for substrate entry. Interconversion between the open-gate and close-gate conformations leads to a dynamic regulation of the 20S proteasome proteolysis activity. In terms of biological role, component of the proteasome core, a large protease complex with broad specificity involved in protein degradation. This chain is Proteasome subunit beta 1, found in Saccharolobus islandicus (strain Y.N.15.51 / Yellowstone #2) (Sulfolobus islandicus).